The chain runs to 321 residues: MARENHSLAAEFILIGFTNYPELKTLLFVVFSAIYLVTMVGNLGLVALIYVERRLLTPMYIFLGNLALMDSCCSCAVTPKMLENFFSEDRIISLYECMAQFYFLCLAETTDCFLLATMAYDRYVAICHPLQYHTMMSKTLCIRMTTGAFKAGNLHSMIHVGLLLRLTFCRSNKIHHFFCDILPLYRLSCTDPSINELMIYIFSIPIQIFTIATVLISYLCILLTVFKMKSKEGRGKAFSTCASHFLSVSIFYICLLMYIGPSEEGDKDTPVAIFYAIVIPLLNPFIYSLRNKEVINVLKKIMRNYNILKQTCSIANLFLIY.

Topologically, residues 1–25 (MARENHSLAAEFILIGFTNYPELKT) are extracellular. An N-linked (GlcNAc...) asparagine glycan is attached at Asn5. A helical membrane pass occupies residues 26–46 (LLFVVFSAIYLVTMVGNLGLV). The Cytoplasmic portion of the chain corresponds to 47-54 (ALIYVERR). The chain crosses the membrane as a helical span at residues 55 to 75 (LLTPMYIFLGNLALMDSCCSC). Topologically, residues 76 to 97 (AVTPKMLENFFSEDRIISLYEC) are extracellular. Cys97 and Cys179 form a disulfide bridge. Residues 98-118 (MAQFYFLCLAETTDCFLLATM) form a helical membrane-spanning segment. Residues 119–139 (AYDRYVAICHPLQYHTMMSKT) lie on the Cytoplasmic side of the membrane. A helical membrane pass occupies residues 140 to 160 (LCIRMTTGAFKAGNLHSMIHV). Over 161–205 (GLLLRLTFCRSNKIHHFFCDILPLYRLSCTDPSINELMIYIFSIP) the chain is Extracellular. A helical transmembrane segment spans residues 206 to 226 (IQIFTIATVLISYLCILLTVF). Over 227 to 240 (KMKSKEGRGKAFST) the chain is Cytoplasmic. A helical membrane pass occupies residues 241–261 (CASHFLSVSIFYICLLMYIGP). The Extracellular segment spans residues 262 to 268 (SEEGDKD). A helical transmembrane segment spans residues 269 to 289 (TPVAIFYAIVIPLLNPFIYSL). Over 290 to 321 (RNKEVINVLKKIMRNYNILKQTCSIANLFLIY) the chain is Cytoplasmic.

The protein belongs to the G-protein coupled receptor 1 family.

The protein localises to the cell membrane. In terms of biological role, odorant receptor. This chain is Olfactory receptor 5K4 (OR5K4), found in Homo sapiens (Human).